We begin with the raw amino-acid sequence, 554 residues long: Inactive sesquithujene synthase B (554 aa).

Positions 308 and 312 each coordinate Mg(2+). 4 residues coordinate substrate: aspartate 308, aspartate 312, arginine 449, and asparagine 452. The DDXXD motif motif lies at 308–312 (DDMFD). Mg(2+) is bound by residues asparagine 452, serine 456, and glutamate 460.

It belongs to the terpene synthase family. In terms of assembly, monomer. The cofactor is Mg(2+). It depends on Mn(2+) as a cofactor.

The protein localises to the cytoplasm. The protein operates within secondary metabolite biosynthesis; terpenoid biosynthesis. Non-functional sesquiterpene synthase having less than 1% of the activity found in TPS5A. The polypeptide is Inactive sesquithujene synthase B (Zea mays (Maize)).